Reading from the N-terminus, the 247-residue chain is Ribonuclease 3 (247 aa).

Residues 23-149 (HADLLERLGV…LLGAIFRQHG (127 aa)) form the RNase III domain. Glutamate 62 is a binding site for Mg(2+). Residue aspartate 66 is part of the active site. Mg(2+)-binding residues include aspartate 135 and glutamate 138. Glutamate 138 is a catalytic residue. The DRBM domain occupies 176-244 (DWKTTLQEEL…ARQAFLKLRE (69 aa)).

Belongs to the ribonuclease III family. In terms of assembly, homodimer. It depends on Mg(2+) as a cofactor.

It is found in the cytoplasm. The catalysed reaction is Endonucleolytic cleavage to 5'-phosphomonoester.. Digests double-stranded RNA. Involved in the processing of primary rRNA transcript to yield the immediate precursors to the large and small rRNAs (23S and 16S). Processes some mRNAs, and tRNAs when they are encoded in the rRNA operon. Processes pre-crRNA and tracrRNA of type II CRISPR loci if present in the organism. This is Ribonuclease 3 from Corynebacterium efficiens (strain DSM 44549 / YS-314 / AJ 12310 / JCM 11189 / NBRC 100395).